We begin with the raw amino-acid sequence, 251 residues long: Probable transcriptional regulatory protein DehaBAV1_0421 (251 aa).

This sequence belongs to the TACO1 family.

It localises to the cytoplasm. The sequence is that of Probable transcriptional regulatory protein DehaBAV1_0421 from Dehalococcoides mccartyi (strain ATCC BAA-2100 / JCM 16839 / KCTC 5957 / BAV1).